A 428-amino-acid polypeptide reads, in one-letter code: Enolase (428 aa).

Residue Gln-163 coordinates (2R)-2-phosphoglycerate. Glu-205 acts as the Proton donor in catalysis. Residues Asp-242, Glu-285, and Asp-312 each coordinate Mg(2+). (2R)-2-phosphoglycerate is bound by residues Lys-337, Arg-366, Ser-367, and Lys-388. The Proton acceptor role is filled by Lys-337.

Belongs to the enolase family. Mg(2+) is required as a cofactor.

Its subcellular location is the cytoplasm. The protein resides in the secreted. It is found in the cell surface. The enzyme catalyses (2R)-2-phosphoglycerate = phosphoenolpyruvate + H2O. The protein operates within carbohydrate degradation; glycolysis; pyruvate from D-glyceraldehyde 3-phosphate: step 4/5. Catalyzes the reversible conversion of 2-phosphoglycerate (2-PG) into phosphoenolpyruvate (PEP). It is essential for the degradation of carbohydrates via glycolysis. The sequence is that of Enolase from Neisseria meningitidis serogroup B (strain ATCC BAA-335 / MC58).